Reading from the N-terminus, the 143-residue chain is ATP synthase F(0) complex subunit C2, mitochondrial (143 aa).

The transit peptide at 1–68 (MYTCAKFVST…RSFQTSAISR (68 aa)) directs the protein to the mitochondrion. A helical transmembrane segment spans residues 84–104 (VGVAGSGAGIGTVFGSLIIGY). Lysine 111 carries the N6,N6,N6-trimethyllysine modification. Residues 119–139 (ILGFALSEAMGLFCLMVAFLI) form a helical membrane-spanning segment.

The protein belongs to the ATPase C chain family. In terms of assembly, F-type ATPases have 2 components, CF(1) - the catalytic core - and CF(0) - the membrane proton channel. CF(1) has five subunits: alpha(3), beta(3), gamma(1), delta(1), epsilon(1). CF(0) has three main subunits: a, b and c. Interacts with DNAJC30; interaction is direct. Post-translationally, trimethylated by ATPSCKMT at Lys-111. Methylation is required for proper incorporation of the C subunit into the ATP synthase complex and mitochondrial respiration.

The protein localises to the mitochondrion membrane. Mitochondrial membrane ATP synthase (F(1)F(0) ATP synthase or Complex V) produces ATP from ADP in the presence of a proton gradient across the membrane which is generated by electron transport complexes of the respiratory chain. F-type ATPases consist of two structural domains, F(1) - containing the extramembraneous catalytic core and F(0) - containing the membrane proton channel, linked together by a central stalk and a peripheral stalk. During catalysis, ATP synthesis in the catalytic domain of F(1) is coupled via a rotary mechanism of the central stalk subunits to proton translocation. Part of the complex F(0) domain. A homomeric c-ring of probably 10 subunits is part of the complex rotary element. This Bos taurus (Bovine) protein is ATP synthase F(0) complex subunit C2, mitochondrial.